The sequence spans 299 residues: Pyridoxal 5'-phosphate synthase subunit PdxS (299 aa).

Position 24 (aspartate 24) interacts with D-ribose 5-phosphate. Lysine 81 acts as the Schiff-base intermediate with D-ribose 5-phosphate in catalysis. Glycine 153 serves as a coordination point for D-ribose 5-phosphate. Arginine 165 serves as a coordination point for D-glyceraldehyde 3-phosphate. Residues glycine 219 and 240–241 (GS) contribute to the D-ribose 5-phosphate site.

Belongs to the PdxS/SNZ family. In terms of assembly, in the presence of PdxT, forms a dodecamer of heterodimers.

The catalysed reaction is aldehydo-D-ribose 5-phosphate + D-glyceraldehyde 3-phosphate + L-glutamine = pyridoxal 5'-phosphate + L-glutamate + phosphate + 3 H2O + H(+). It participates in cofactor biosynthesis; pyridoxal 5'-phosphate biosynthesis. Catalyzes the formation of pyridoxal 5'-phosphate from ribose 5-phosphate (RBP), glyceraldehyde 3-phosphate (G3P) and ammonia. The ammonia is provided by the PdxT subunit. Can also use ribulose 5-phosphate and dihydroxyacetone phosphate as substrates, resulting from enzyme-catalyzed isomerization of RBP and G3P, respectively. The chain is Pyridoxal 5'-phosphate synthase subunit PdxS from Methanococcus maripaludis (strain C6 / ATCC BAA-1332).